We begin with the raw amino-acid sequence, 357 residues long: Beta-hexosaminidase (357 aa).

Residues Asp-72, Arg-80, Arg-146, and 176–177 (KH) contribute to the substrate site. Residue His-189 is the Proton donor/acceptor of the active site. Catalysis depends on Asp-260, which acts as the Nucleophile.

Belongs to the glycosyl hydrolase 3 family. NagZ subfamily.

The protein localises to the cytoplasm. It carries out the reaction Hydrolysis of terminal non-reducing N-acetyl-D-hexosamine residues in N-acetyl-beta-D-hexosaminides.. Its pathway is cell wall biogenesis; peptidoglycan recycling. Plays a role in peptidoglycan recycling by cleaving the terminal beta-1,4-linked N-acetylglucosamine (GlcNAc) from peptide-linked peptidoglycan fragments, giving rise to free GlcNAc, anhydro-N-acetylmuramic acid and anhydro-N-acetylmuramic acid-linked peptides. The chain is Beta-hexosaminidase from Hydrogenovibrio crunogenus (strain DSM 25203 / XCL-2) (Thiomicrospira crunogena).